The sequence spans 168 residues: Crossover junction endodeoxyribonuclease RuvC (168 aa).

Catalysis depends on residues aspartate 9, glutamate 70, and aspartate 145. Positions 9, 70, and 145 each coordinate Mg(2+).

The protein belongs to the RuvC family. Homodimer which binds Holliday junction (HJ) DNA. The HJ becomes 2-fold symmetrical on binding to RuvC with unstacked arms; it has a different conformation from HJ DNA in complex with RuvA. In the full resolvosome a probable DNA-RuvA(4)-RuvB(12)-RuvC(2) complex forms which resolves the HJ. It depends on Mg(2+) as a cofactor.

The protein resides in the cytoplasm. The catalysed reaction is Endonucleolytic cleavage at a junction such as a reciprocal single-stranded crossover between two homologous DNA duplexes (Holliday junction).. The RuvA-RuvB-RuvC complex processes Holliday junction (HJ) DNA during genetic recombination and DNA repair. Endonuclease that resolves HJ intermediates. Cleaves cruciform DNA by making single-stranded nicks across the HJ at symmetrical positions within the homologous arms, yielding a 5'-phosphate and a 3'-hydroxyl group; requires a central core of homology in the junction. The consensus cleavage sequence is 5'-(A/T)TT(C/G)-3'. Cleavage occurs on the 3'-side of the TT dinucleotide at the point of strand exchange. HJ branch migration catalyzed by RuvA-RuvB allows RuvC to scan DNA until it finds its consensus sequence, where it cleaves and resolves the cruciform DNA. This Chlamydia felis (strain Fe/C-56) (Chlamydophila felis) protein is Crossover junction endodeoxyribonuclease RuvC.